The primary structure comprises 61 residues: Large ribosomal subunit protein bL28 (61 aa).

Residues 1–26 form a disordered region; that stretch reads MAKDFVTGKHTRFGNTRSHALNHSRR.

Belongs to the bacterial ribosomal protein bL28 family.

This is Large ribosomal subunit protein bL28 from Pediococcus pentosaceus (strain ATCC 25745 / CCUG 21536 / LMG 10740 / 183-1w).